The primary structure comprises 263 residues: Acetyl-coenzyme A carboxylase carboxyl transferase subunit beta (263 aa).

A CoA carboxyltransferase N-terminal domain is found at Met1–Ala263. Residues Cys3, Cys6, Cys22, and Cys25 each coordinate Zn(2+). Residues Cys3–Cys25 form a C4-type zinc finger.

It belongs to the AccD/PCCB family. Acetyl-CoA carboxylase is a heterohexamer composed of biotin carboxyl carrier protein (AccB), biotin carboxylase (AccC) and two subunits each of ACCase subunit alpha (AccA) and ACCase subunit beta (AccD). Requires Zn(2+) as cofactor.

Its subcellular location is the cytoplasm. It catalyses the reaction N(6)-carboxybiotinyl-L-lysyl-[protein] + acetyl-CoA = N(6)-biotinyl-L-lysyl-[protein] + malonyl-CoA. Its pathway is lipid metabolism; malonyl-CoA biosynthesis; malonyl-CoA from acetyl-CoA: step 1/1. Functionally, component of the acetyl coenzyme A carboxylase (ACC) complex. Biotin carboxylase (BC) catalyzes the carboxylation of biotin on its carrier protein (BCCP) and then the CO(2) group is transferred by the transcarboxylase to acetyl-CoA to form malonyl-CoA. This chain is Acetyl-coenzyme A carboxylase carboxyl transferase subunit beta, found in Treponema denticola (strain ATCC 35405 / DSM 14222 / CIP 103919 / JCM 8153 / KCTC 15104).